Here is a 415-residue protein sequence, read N- to C-terminus: Multifunctional CCA protein (415 aa).

ATP contacts are provided by G8 and R11. CTP-binding residues include G8 and R11. Residues D21 and D23 each contribute to the Mg(2+) site. 3 residues coordinate ATP: R91, R137, and R140. Residues R91, R137, and R140 each coordinate CTP. The region spanning 228-329 is the HD domain; the sequence is TGIHTLMTLA…VGLFDSIDAW (102 aa).

It belongs to the tRNA nucleotidyltransferase/poly(A) polymerase family. Bacterial CCA-adding enzyme type 1 subfamily. Monomer. Can also form homodimers and oligomers. It depends on Mg(2+) as a cofactor. Ni(2+) serves as cofactor.

The catalysed reaction is a tRNA precursor + 2 CTP + ATP = a tRNA with a 3' CCA end + 3 diphosphate. It carries out the reaction a tRNA with a 3' CCA end + 2 CTP + ATP = a tRNA with a 3' CCACCA end + 3 diphosphate. Catalyzes the addition and repair of the essential 3'-terminal CCA sequence in tRNAs without using a nucleic acid template. Adds these three nucleotides in the order of C, C, and A to the tRNA nucleotide-73, using CTP and ATP as substrates and producing inorganic pyrophosphate. tRNA 3'-terminal CCA addition is required both for tRNA processing and repair. Also involved in tRNA surveillance by mediating tandem CCA addition to generate a CCACCA at the 3' terminus of unstable tRNAs. While stable tRNAs receive only 3'-terminal CCA, unstable tRNAs are marked with CCACCA and rapidly degraded. The sequence is that of Multifunctional CCA protein from Cronobacter sakazakii (strain ATCC BAA-894) (Enterobacter sakazakii).